Consider the following 368-residue polypeptide: Single-stranded DNA-binding protein 3 (368 aa).

Residues 16 to 48 (AREKLALYVYEYLLHVGAQKSAQTFLSEIRWEK) form the LisH domain. The segment at 100–368 (PVLGNIPPND…NYSPSMTMSV (269 aa)) is disordered. Residues 126 to 139 (GSQPSPHAQPPPHN) are compositionally biased toward pro residues. Low complexity-rich tracts occupy residues 174–189 (PNMGGPMQRMNPPRGM), 211–220 (GPGMPGINMG), and 230–248 (PSSANSIPYSSSSPGTYVG). Pro residues predominate over residues 252–262 (GGGPPGTPIMP). A compositionally biased stretch (polar residues) spans 265–276 (ADSTNSSDNIYT). Positions 295–305 (GSDGPMGGMGG) are enriched in gly residues. A compositionally biased stretch (low complexity) spans 326–337 (NSPNNISGISNP). The span at 353 to 368 (HSFQNDNYSPSMTMSV) shows a compositional bias: polar residues.

Expressed in embryonic fibroblasts and chondrocytes.

It localises to the nucleus. Functionally, may be involved in transcription regulation of the alpha 2(I) collagen gene where it binds to the single-stranded polypyrimidine sequences in the promoter region. In Gallus gallus (Chicken), this protein is Single-stranded DNA-binding protein 3 (SSBP3).